The sequence spans 233 residues: uncharacterized protein (233 aa).

Residues 21–41 traverse the membrane as a helical segment; sequence LNILIAIVSILIVVVAANLFI. The tract at residues 44-163 is disordered; it reads PSSKDVSKDS…GEHAATYDSS (120 aa). 3 stretches are compositionally biased toward basic and acidic residues: residues 48–57, 66–108, and 135–144; these read DVSKDSETAQ, KTEK…KKDD, and DVEKTYENPD.

The protein resides in the cell membrane. This is an uncharacterized protein from Bacillus subtilis (strain 168).